Here is a 121-residue protein sequence, read N- to C-terminus: uncharacterized protein (121 aa).

Helical transmembrane passes span 2–22 (VFVT…IYTI), 42–62 (FICI…YILF), and 89–109 (IFFA…LSIF).

It is found in the membrane. This is an uncharacterized protein from Saccharomyces cerevisiae (strain ATCC 204508 / S288c) (Baker's yeast).